The following is a 142-amino-acid chain: Hemoglobin subunit alpha-2 (142 aa).

One can recognise a Globin domain in the interval Val2–Arg142. His59 contacts O2. His88 serves as a coordination point for heme b.

This sequence belongs to the globin family. In terms of assembly, heterotetramer of two alpha chains and two beta chains.

Involved in oxygen transport from the lung to the various peripheral tissues. In terms of biological role, hemopressin acts as an antagonist peptide of the cannabinoid receptor CNR1. Hemopressin-binding efficiently blocks cannabinoid receptor CNR1 and subsequent signaling. This chain is Hemoglobin subunit alpha-2 (HBA2), found in Capra hircus (Goat).